The chain runs to 119 residues: Putative arsenical resistance operon repressor ArsR2 (119 aa).

The region spanning 24–119 is the HTH arsR-type domain; the sequence is VDSDAMATDL…TLDDLRGNHE (96 aa). Residues 60–83 constitute a DNA-binding region (H-T-H motif); it reads VCDLEATVGVSQSAVSQALSRLYT.

Functionally, transcriptional repressor for the arsR2M operon. The chain is Putative arsenical resistance operon repressor ArsR2 (arsR2) from Halobacterium salinarum (strain ATCC 700922 / JCM 11081 / NRC-1) (Halobacterium halobium).